Consider the following 98-residue polypeptide: NADH-ubiquinone oxidoreductase chain 4L (98 aa).

Transmembrane regions (helical) follow at residues 1–21 (MTLIHMNILMAFSMSLVGLLM), 29–49 (ALLCLEGMMLSLFILAALTIL), and 61–81 (IILLVFAACEAAIGLALLVMV).

The protein belongs to the complex I subunit 4L family. Core subunit of respiratory chain NADH dehydrogenase (Complex I) which is composed of 45 different subunits.

Its subcellular location is the mitochondrion inner membrane. The catalysed reaction is a ubiquinone + NADH + 5 H(+)(in) = a ubiquinol + NAD(+) + 4 H(+)(out). In terms of biological role, core subunit of the mitochondrial membrane respiratory chain NADH dehydrogenase (Complex I) which catalyzes electron transfer from NADH through the respiratory chain, using ubiquinone as an electron acceptor. Part of the enzyme membrane arm which is embedded in the lipid bilayer and involved in proton translocation. The sequence is that of NADH-ubiquinone oxidoreductase chain 4L (MT-ND4L) from Balaenoptera omurai (Omura's baleen whale).